We begin with the raw amino-acid sequence, 494 residues long: 3-octaprenyl-4-hydroxybenzoate carboxy-lyase (494 aa).

N172 lines the Mn(2+) pocket. Prenylated FMN-binding positions include 175-177 (IYR), 189-191 (RWL), and 194-195 (RG). E238 is a Mn(2+) binding site. D294 acts as the Proton donor in catalysis.

Belongs to the UbiD family. In terms of assembly, homohexamer. Prenylated FMN is required as a cofactor. The cofactor is Mn(2+).

It is found in the cell membrane. The enzyme catalyses a 4-hydroxy-3-(all-trans-polyprenyl)benzoate + H(+) = a 2-(all-trans-polyprenyl)phenol + CO2. Its pathway is cofactor biosynthesis; ubiquinone biosynthesis. Its function is as follows. Catalyzes the decarboxylation of 3-octaprenyl-4-hydroxy benzoate to 2-octaprenylphenol, an intermediate step in ubiquinone biosynthesis. The sequence is that of 3-octaprenyl-4-hydroxybenzoate carboxy-lyase from Albidiferax ferrireducens (strain ATCC BAA-621 / DSM 15236 / T118) (Rhodoferax ferrireducens).